The sequence spans 289 residues: Phosphatidylglycerol--prolipoprotein diacylglyceryl transferase (289 aa).

Transmembrane regions (helical) follow at residues 13 to 33 (LGPLAIRWYALAYVAGILLGW), 61 to 81 (FILWVTLAIIVGGRLGHVLFY), and 99 to 119 (GGMSFHGGAIGVFLAIILFAM). An a 1,2-diacyl-sn-glycero-3-phospho-(1'-sn-glycerol)-binding site is contributed by arginine 144. A run of 2 helical transmembrane segments spans residues 218 to 238 (GVVMGLFTTFYAVFRISLENV) and 250 to 270 (LGLTMGIYLSIPMLLFGLWLI).

It belongs to the Lgt family.

It localises to the cell inner membrane. The enzyme catalyses L-cysteinyl-[prolipoprotein] + a 1,2-diacyl-sn-glycero-3-phospho-(1'-sn-glycerol) = an S-1,2-diacyl-sn-glyceryl-L-cysteinyl-[prolipoprotein] + sn-glycerol 1-phosphate + H(+). Its pathway is protein modification; lipoprotein biosynthesis (diacylglyceryl transfer). Its function is as follows. Catalyzes the transfer of the diacylglyceryl group from phosphatidylglycerol to the sulfhydryl group of the N-terminal cysteine of a prolipoprotein, the first step in the formation of mature lipoproteins. The sequence is that of Phosphatidylglycerol--prolipoprotein diacylglyceryl transferase from Phenylobacterium zucineum (strain HLK1).